We begin with the raw amino-acid sequence, 239 residues long: Ribosomal RNA small subunit methyltransferase G (239 aa).

S-adenosyl-L-methionine contacts are provided by residues G77, F82, 128–129, and R147; that span reads AE.

This sequence belongs to the methyltransferase superfamily. RNA methyltransferase RsmG family.

The protein localises to the cytoplasm. Specifically methylates the N7 position of guanine in position 535 of 16S rRNA. This is Ribosomal RNA small subunit methyltransferase G from Bacillus mycoides (strain KBAB4) (Bacillus weihenstephanensis).